The primary structure comprises 216 residues: Maleylacetoacetate isomerase (216 aa).

N-acetylmethionine is present on M1. Positions 4-87 constitute a GST N-terminal domain; the sequence is GKPVLYSYFR…YLEETRPIPR (84 aa). Glutathione contacts are provided by residues 14 to 19 and Q45; that span reads SSCSWR. Position 57 is an N6-succinyllysine (K57). Glutathione is bound by residues V59, 71 to 72, Q111, and 115 to 117; these read QS and NLS. Residues 92–212 form the GST C-terminal domain; that stretch reads DPQKRAIVRM…HPCRQPDTPA (121 aa). At T136 the chain carries Phosphothreonine. S137 carries the post-translational modification Phosphoserine. K177 is modified (N6-succinyllysine). Phosphoserine is present on S181.

Belongs to the GST superfamily. Zeta family. As to quaternary structure, homodimer. Glutathione is required as a cofactor. The N-terminus is blocked.

It is found in the cytoplasm. It catalyses the reaction 4-maleylacetoacetate = 4-fumarylacetoacetate. It carries out the reaction RX + glutathione = an S-substituted glutathione + a halide anion + H(+). It participates in amino-acid degradation; L-phenylalanine degradation; acetoacetate and fumarate from L-phenylalanine: step 5/6. Its function is as follows. Probable bifunctional enzyme showing minimal glutathione-conjugating activity with ethacrynic acid and 7-chloro-4-nitrobenz-2-oxa-1, 3-diazole and maleylacetoacetate isomerase activity. Also has low glutathione peroxidase activity with t-butyl and cumene hydroperoxides. Is able to catalyze the glutathione dependent oxygenation of dichloroacetic acid to glyoxylic acid. The sequence is that of Maleylacetoacetate isomerase (Gstz1) from Rattus norvegicus (Rat).